A 244-amino-acid chain; its full sequence is Triosephosphate isomerase (244 aa).

Substrate is bound at residue 9-11; it reads NWK. His-93 functions as the Electrophile in the catalytic mechanism. Residue Glu-160 is the Proton acceptor of the active site. Gly-166 and Ser-206 together coordinate substrate.

Belongs to the triosephosphate isomerase family. Homodimer.

The protein resides in the cytoplasm. It catalyses the reaction D-glyceraldehyde 3-phosphate = dihydroxyacetone phosphate. The protein operates within carbohydrate biosynthesis; gluconeogenesis. It functions in the pathway carbohydrate degradation; glycolysis; D-glyceraldehyde 3-phosphate from glycerone phosphate: step 1/1. Functionally, involved in the gluconeogenesis. Catalyzes stereospecifically the conversion of dihydroxyacetone phosphate (DHAP) to D-glyceraldehyde-3-phosphate (G3P). The chain is Triosephosphate isomerase from Mycoplasma genitalium (strain ATCC 33530 / DSM 19775 / NCTC 10195 / G37) (Mycoplasmoides genitalium).